The sequence spans 170 residues: Adenine phosphoribosyltransferase (170 aa).

Belongs to the purine/pyrimidine phosphoribosyltransferase family. Homodimer.

It is found in the cytoplasm. It carries out the reaction AMP + diphosphate = 5-phospho-alpha-D-ribose 1-diphosphate + adenine. It functions in the pathway purine metabolism; AMP biosynthesis via salvage pathway; AMP from adenine: step 1/1. Functionally, catalyzes a salvage reaction resulting in the formation of AMP, that is energically less costly than de novo synthesis. In Prochlorococcus marinus (strain AS9601), this protein is Adenine phosphoribosyltransferase.